A 218-amino-acid polypeptide reads, in one-letter code: Cytochrome c biogenesis ATP-binding export protein CcmA (218 aa).

Residues 12–217 enclose the ABC transporter domain; it reads LHAEQLSSIR…KLSLEYRGEV (206 aa). ATP is bound at residue 44–51; it reads GPNGAGKS.

Belongs to the ABC transporter superfamily. CcmA exporter (TC 3.A.1.107) family. The complex is composed of two ATP-binding proteins (CcmA) and two transmembrane proteins (CcmB).

Its subcellular location is the cell inner membrane. It catalyses the reaction heme b(in) + ATP + H2O = heme b(out) + ADP + phosphate + H(+). Functionally, part of the ABC transporter complex CcmAB involved in the biogenesis of c-type cytochromes; once thought to export heme, this seems not to be the case, but its exact role is uncertain. Responsible for energy coupling to the transport system. The protein is Cytochrome c biogenesis ATP-binding export protein CcmA of Idiomarina loihiensis (strain ATCC BAA-735 / DSM 15497 / L2-TR).